A 574-amino-acid chain; its full sequence is MYND-type zinc finger protein C31F10.10c (574 aa).

Disordered regions lie at residues Asp-207 to Arg-253 and Met-283 to Asp-307. 2 stretches are compositionally biased toward polar residues: residues Ile-243–Arg-253 and Met-283–Thr-301. The MYND-type; degenerate zinc-finger motif lies at Asn-482 to Cys-523. Positions 498, 501, 519, and 523 each coordinate Zn(2+). Residues Lys-534 to Leu-574 are disordered. The segment covering Ser-542–Val-556 has biased composition (low complexity). A compositionally biased stretch (polar residues) spans Glu-562 to Leu-574.

This sequence belongs to the MUB1/samB family.

Its subcellular location is the nucleus. It is found in the cytoplasm. The protein resides in the cytoskeleton. It localises to the microtubule organizing center. The protein localises to the spindle pole body. The polypeptide is MYND-type zinc finger protein C31F10.10c (Schizosaccharomyces pombe (strain 972 / ATCC 24843) (Fission yeast)).